Consider the following 184-residue polypeptide: Tumor necrosis factor alpha-induced protein 8-like protein 2 (184 aa).

Ser-3 is subject to Phosphoserine; by MAP3K7.

This sequence belongs to the TNFAIP8 family. TNFAIP8L2 subfamily. In terms of assembly, may interact with CASP8; however, such result is unclear since PubMed:19079267 could not reproduce the interaction with CASP8. Interacts with RAC1. Phosphorylated by TAK1/MAP3K7; this phosphorylation triggers association with BTRC and subsequent ubiquitination and degradation. Post-translationally, ubiquitinated in a BTRC-depdent manner; leading to degradation mediated through the proteasome pathway. Expressed in T-cells, B-cells, macrophages, neurons in the brain and brainstem, and stratified squamous epithelia of the esophagus, cervix and skin.

Its subcellular location is the cytoplasm. It localises to the nucleus. The protein localises to the lysosome. Functionally, acts as a negative regulator of innate and adaptive immunity by maintaining immune homeostasis. Plays a regulatory role in the Toll-like signaling pathway by determining the strength of LPS-induced signaling and gene expression. Inhibits TCR-mediated T-cell activation and negatively regulate T-cell function to prevent hyperresponsiveness. Also inhibits autolysosome formation via negatively modulating MTOR activation by interacting with RAC1 and promoting the disassociation of the RAC1-MTOR complex. Plays an essential role in NK-cell biology by acting as a checkpoint and displaying an expression pattern correlating with NK-cell maturation process and by negatively regulating NK-cell maturation and antitumor immunity. Mechanistically, suppresses IL-15-triggered mTOR activity in NK-cells. This is Tumor necrosis factor alpha-induced protein 8-like protein 2 (TNFAIP8L2) from Homo sapiens (Human).